Reading from the N-terminus, the 37-residue chain is Large ribosomal subunit protein bL36c (37 aa).

It belongs to the bacterial ribosomal protein bL36 family.

Its subcellular location is the plastid. The protein resides in the organellar chromatophore. The protein is Large ribosomal subunit protein bL36c of Paulinella chromatophora.